We begin with the raw amino-acid sequence, 186 residues long: Ribosome-recycling factor (186 aa).

This sequence belongs to the RRF family.

Its subcellular location is the cytoplasm. Responsible for the release of ribosomes from messenger RNA at the termination of protein biosynthesis. May increase the efficiency of translation by recycling ribosomes from one round of translation to another. This is Ribosome-recycling factor from Polynucleobacter asymbioticus (strain DSM 18221 / CIP 109841 / QLW-P1DMWA-1) (Polynucleobacter necessarius subsp. asymbioticus).